The primary structure comprises 353 residues: Photosystem II protein D1 (353 aa).

Thr2 is subject to N-acetylthreonine. Thr2 is modified (phosphothreonine). The next 3 helical transmembrane spans lie at 29–46 (YIGW…TATA), 118–133 (HFLL…EWEL), and 142–156 (WIAV…AAAA). His118 is a chlorophyll a binding site. Tyr126 provides a ligand contact to pheophytin a. Residues Asp170 and Glu189 each contribute to the [CaMn4O5] cluster site. A helical transmembrane segment spans residues 197-218 (FHMLGVAGVFGGSLFSAMHGSL). A chlorophyll a-binding site is contributed by His198. Residues His215 and 264–265 (SF) each bind a quinone. His215 contacts Fe cation. His272 contacts Fe cation. The helical transmembrane segment at 274–288 (FLAAWPVVGIWFTAL) threads the bilayer. Residues His332, Glu333, Asp342, and Ala344 each coordinate [CaMn4O5] cluster. Positions 345-353 (SVEAPSVNG) are excised as a propeptide.

This sequence belongs to the reaction center PufL/M/PsbA/D family. As to quaternary structure, PSII is composed of 1 copy each of membrane proteins PsbA, PsbB, PsbC, PsbD, PsbE, PsbF, PsbH, PsbI, PsbJ, PsbK, PsbL, PsbM, PsbT, PsbX, PsbY, PsbZ, Psb30/Ycf12, at least 3 peripheral proteins of the oxygen-evolving complex and a large number of cofactors. It forms dimeric complexes. The D1/D2 heterodimer binds P680, chlorophylls that are the primary electron donor of PSII, and subsequent electron acceptors. It shares a non-heme iron and each subunit binds pheophytin, quinone, additional chlorophylls, carotenoids and lipids. D1 provides most of the ligands for the Mn4-Ca-O5 cluster of the oxygen-evolving complex (OEC). There is also a Cl(-1) ion associated with D1 and D2, which is required for oxygen evolution. The PSII complex binds additional chlorophylls, carotenoids and specific lipids. serves as cofactor. Tyr-161 forms a radical intermediate that is referred to as redox-active TyrZ, YZ or Y-Z. Post-translationally, C-terminally processed by CTPA; processing is essential to allow assembly of the oxygen-evolving complex and thus photosynthetic growth.

The protein localises to the plastid. The protein resides in the chloroplast thylakoid membrane. It catalyses the reaction 2 a plastoquinone + 4 hnu + 2 H2O = 2 a plastoquinol + O2. In terms of biological role, photosystem II (PSII) is a light-driven water:plastoquinone oxidoreductase that uses light energy to abstract electrons from H(2)O, generating O(2) and a proton gradient subsequently used for ATP formation. It consists of a core antenna complex that captures photons, and an electron transfer chain that converts photonic excitation into a charge separation. The D1/D2 (PsbA/PsbD) reaction center heterodimer binds P680, the primary electron donor of PSII as well as several subsequent electron acceptors. This Huperzia lucidula (Shining clubmoss) protein is Photosystem II protein D1.